A 557-amino-acid polypeptide reads, in one-letter code: TNF receptor-associated factor 5 (557 aa).

The RING-type zinc-finger motif lies at 45 to 85; that stretch reads CAFCHSVLHNPHQTGCGHRFCQHCILSLRELNTVPICPVDK. TRAF-type zinc fingers lie at residues 127 to 181 and 182 to 239; these read DHLQ…INLQ and NHEE…RNLQ. The stretch at 237-342 forms a coiled coil; it reads NLQQHEHSAL…VNQQQNKFDL (106 aa). Residue K318 forms a Glycyl lysine isopeptide (Lys-Gly) (interchain with G-Cter in ubiquitin) linkage. An interaction with EIF2AK2/PKR region spans residues 345-557; it reads LMEAVDTVKQ…AVDLTDLEDL (213 aa). The MATH domain maps to 403–549; sequence NGKLIWKVTD…DDTLFLKVAV (147 aa).

The protein belongs to the TNF receptor-associated factor family. A subfamily. Homotrimer. Heteromer with TRAF3. Associates with TNFRSF5/CD40 through interaction with TRAF3. Associates with LTBR/TNFRSF3, TNFRSF4, TNFRSF8/CD30, TNFRSF11A/RANK, TNFRSF13B/TACI, TNFRSF14, TNFRSF17, TNFRSF19/TROY, RIPK2, MAP3K14, MAP3K5, and TRAF and TNF receptor associated protein TDP2. Interacts (via C-terminus) with EIF2AK2/PKR (via the kinase catalytic domain). Post-translationally, ubiquitinated at Lys-318 by the SCF(FBXL2) complex, leading to its degradation by the proteasome. In terms of tissue distribution, expressed in spleen, thymus, prostate, testis, ovary, small intestine, colon, and peripheral blood.

It is found in the cytoplasm. The protein localises to the cytosol. Its function is as follows. Adapter protein and signal transducer that links members of the tumor necrosis factor receptor family to different signaling pathways by association with the receptor cytoplasmic domain and kinases. Mediates activation of NF-kappa-B and probably JNK. Seems to be involved in apoptosis. Plays a role in mediating activation of NF-kappa-B by EIF2AK2/PKR. In Homo sapiens (Human), this protein is TNF receptor-associated factor 5 (TRAF5).